The sequence spans 621 residues: MSHVLVNVAWPYANGPRHIGHVAGFGVPSDVYARYERMKGNDVLMVSGTDEHGTPILVEAEKEGLTAQELANRYNRVIAKDLCDLGLSYDLFTRTTTGNHEHVVQEMFKQCLENGYIYKGTQQVAISPSTGRTLPDRYIEGECPICHAEGARGDQCDACGNELDPDELINPVSKINGETPRFEQTEHYFLDLPALAEANKAWLETRKGWRTNVINFSLGLFKEVKPRAITRDIDWGIPVPVKGWIDNPNKKLYVWFDAVIGYLSASIEWARRQGDPEKWREWWNDPACPAYYFMGKDNITFHSQIWPSEMLAYNGKGSKGGETGPMGPLNLPEQVVASEFMTMEGKKFSSSRGIVIYVKDILARYPVDAVRYYISVAGPESSDSDFTWAEFVRHNNEELASSWGNLVNRVANLINKNFGEIPPLDEDSMTNEDRGLLEEASAAFDVVGSSIETHHQKHALSEAMRVVGDINKYISATEPWKIKDDQARLGTVLHVAAQAVSDANHLLAPFLPHSAQKVWEALGGTGTFSPLPELKEVEDLDKPGFTYPIITGDYELGVNVHPWKSEAIEVGAMVPKPAPIFAKIPTEAVEEELARFDEALAARRAAEAERLAAEKAKLAAE.

Residues 11–21 (PYANGPRHIGH) carry the 'HIGH' region motif. 4 residues coordinate Zn(2+): Cys143, Cys146, Cys156, and Cys159. The short motif at 347–351 (KFSSS) is the 'KMSKS' region element. Position 350 (Ser350) interacts with ATP.

Belongs to the class-I aminoacyl-tRNA synthetase family. MetG type 1 subfamily. In terms of assembly, monomer. The cofactor is Zn(2+).

The protein resides in the cytoplasm. The enzyme catalyses tRNA(Met) + L-methionine + ATP = L-methionyl-tRNA(Met) + AMP + diphosphate. In terms of biological role, is required not only for elongation of protein synthesis but also for the initiation of all mRNA translation through initiator tRNA(fMet) aminoacylation. This Bifidobacterium longum (strain NCC 2705) protein is Methionine--tRNA ligase.